Here is a 266-residue protein sequence, read N- to C-terminus: 5'-nucleotidase SurE (266 aa).

Aspartate 10, aspartate 11, serine 41, and asparagine 97 together coordinate a divalent metal cation.

It belongs to the SurE nucleotidase family. A divalent metal cation serves as cofactor.

Its subcellular location is the cytoplasm. The enzyme catalyses a ribonucleoside 5'-phosphate + H2O = a ribonucleoside + phosphate. Nucleotidase that shows phosphatase activity on nucleoside 5'-monophosphates. The protein is 5'-nucleotidase SurE of Methanocella arvoryzae (strain DSM 22066 / NBRC 105507 / MRE50).